We begin with the raw amino-acid sequence, 184 residues long: MAKICGIDEAGRGALAGPLSVAACVLNSEISGLNDSKKLTAKRREELFKKITKSSNFLIAYFSNAQIDELGLSECLRRALKLFKAHFESFEIIYDGNLDYGVGITTMIKADGKVAGVSAASILAKVSRDRLMNGWDKFYPAYGFAGHKGYGTKSHLDAIAKFGYSDFHRKSFVIKPKLAQSSLF.

Residues 2-184 form the RNase H type-2 domain; the sequence is AKICGIDEAG…KPKLAQSSLF (183 aa). Asp-8, Glu-9, and Asp-95 together coordinate a divalent metal cation.

It belongs to the RNase HII family. It depends on Mn(2+) as a cofactor. The cofactor is Mg(2+).

Its subcellular location is the cytoplasm. The catalysed reaction is Endonucleolytic cleavage to 5'-phosphomonoester.. Its function is as follows. Endonuclease that specifically degrades the RNA of RNA-DNA hybrids. In Campylobacter concisus (strain 13826), this protein is Ribonuclease HII.